We begin with the raw amino-acid sequence, 361 residues long: Anthranilate phosphoribosyltransferase (361 aa).

Residues Gly80, 83–84, Thr88, 90–93, 108–116, and Ser120 contribute to the 5-phospho-alpha-D-ribose 1-diphosphate site; these read GD, NVST, and KHGNYSVSS. Gly80 is an anthranilate binding site. Ser92 contributes to the Mg(2+) binding site. Asn111 lines the anthranilate pocket. Residue Arg166 participates in anthranilate binding. Mg(2+) contacts are provided by Asp224 and Glu225. Residues 338–361 are disordered; sequence EGDGEAASTDSAAASTTAGPEDDD. Low complexity predominate over residues 343–355; that stretch reads AASTDSAAASTTA.

This sequence belongs to the anthranilate phosphoribosyltransferase family. As to quaternary structure, homodimer. Mg(2+) serves as cofactor.

It carries out the reaction N-(5-phospho-beta-D-ribosyl)anthranilate + diphosphate = 5-phospho-alpha-D-ribose 1-diphosphate + anthranilate. It functions in the pathway amino-acid biosynthesis; L-tryptophan biosynthesis; L-tryptophan from chorismate: step 2/5. Catalyzes the transfer of the phosphoribosyl group of 5-phosphorylribose-1-pyrophosphate (PRPP) to anthranilate to yield N-(5'-phosphoribosyl)-anthranilate (PRA). This Halorubrum lacusprofundi (strain ATCC 49239 / DSM 5036 / JCM 8891 / ACAM 34) protein is Anthranilate phosphoribosyltransferase.